The sequence spans 843 residues: DNA gyrase subunit A (843 aa).

The Topo IIA-type catalytic domain maps to 61-528; it reads LPDVRDGLKP…ESSTFNAEDL (468 aa). Y149 (O-(5'-phospho-DNA)-tyrosine intermediate) is an active-site residue. The short motif at 555–561 is the GyrA-box element; it reads QKRGGKG.

Belongs to the type II topoisomerase GyrA/ParC subunit family. Heterotetramer, composed of two GyrA and two GyrB chains. In the heterotetramer, GyrA contains the active site tyrosine that forms a transient covalent intermediate with DNA, while GyrB binds cofactors and catalyzes ATP hydrolysis.

It localises to the cytoplasm. The catalysed reaction is ATP-dependent breakage, passage and rejoining of double-stranded DNA.. Its function is as follows. A type II topoisomerase that negatively supercoils closed circular double-stranded (ds) DNA in an ATP-dependent manner to modulate DNA topology and maintain chromosomes in an underwound state. Negative supercoiling favors strand separation, and DNA replication, transcription, recombination and repair, all of which involve strand separation. Also able to catalyze the interconversion of other topological isomers of dsDNA rings, including catenanes and knotted rings. Type II topoisomerases break and join 2 DNA strands simultaneously in an ATP-dependent manner. The sequence is that of DNA gyrase subunit A from Leptospira biflexa serovar Patoc (strain Patoc 1 / Ames).